The chain runs to 212 residues: Protein GET1 (212 aa).

Residues 1 to 4 (MASL) are Lumenal-facing. Residues 5–24 (LLFVLVIQIITYLINTIGAR) traverse the membrane as a helical segment. Topologically, residues 25–110 (TIDSLLWLLY…SFDWTIKTVR (86 aa)) are cytoplasmic. A coiled-coil region spans residues 75 to 99 (AKLRRRHDKAMEEYDVKNKKLSALK). The helical transmembrane segment at 111-131 (WVSTTGVTVILQFWFSKSPIF) threads the bilayer. Residues 132–155 (DLPRGWLPWQVEWILSFPRAPLGT) lie on the Lumenal side of the membrane. Residues 156 to 172 (VSIQVWGGACGTVIALV) traverse the membrane as a helical segment. Residues 173 to 212 (GGAMGVAAPAFKKINQPRGEAQKMGTPRGSREQTPVRKTQ) lie on the Cytoplasmic side of the membrane. Residues 189–212 (PRGEAQKMGTPRGSREQTPVRKTQ) form a disordered region. A compositionally biased stretch (basic and acidic residues) spans 201-212 (GSREQTPVRKTQ).

Belongs to the WRB/GET1 family. Interacts with GET3.

It is found in the endoplasmic reticulum membrane. In terms of biological role, required for the post-translational delivery of tail-anchored (TA) proteins to the endoplasmic reticulum. Acts as a membrane receptor for soluble GET3, which recognizes and selectively binds the transmembrane domain of TA proteins in the cytosol. The chain is Protein GET1 from Arthroderma otae (strain ATCC MYA-4605 / CBS 113480) (Microsporum canis).